We begin with the raw amino-acid sequence, 84 residues long: Translation initiation factor IF-1, chloroplastic (84 aa).

Positions 1–72 (MKKQNLVEME…SKGRITYRLR (72 aa)) constitute an S1-like domain.

It belongs to the IF-1 family. Component of the 30S ribosomal translation pre-initiation complex which assembles on the 30S ribosome in the order IF-2 and IF-3, IF-1 and N-formylmethionyl-tRNA(fMet); mRNA recruitment can occur at any time during PIC assembly.

It is found in the plastid. The protein localises to the chloroplast. Functionally, one of the essential components for the initiation of protein synthesis. Stabilizes the binding of IF-2 and IF-3 on the 30S subunit to which N-formylmethionyl-tRNA(fMet) subsequently binds. Helps modulate mRNA selection, yielding the 30S pre-initiation complex (PIC). Upon addition of the 50S ribosomal subunit IF-1, IF-2 and IF-3 are released leaving the mature 70S translation initiation complex. In Spirogyra maxima (Green alga), this protein is Translation initiation factor IF-1, chloroplastic.